Consider the following 77-residue polypeptide: Acyl carrier protein (77 aa).

The Carrier domain maps to 2 to 77 (SEKLQKIQAL…DAVAYIEERS (76 aa)). S37 carries the O-(pantetheine 4'-phosphoryl)serine modification.

This sequence belongs to the acyl carrier protein (ACP) family. Post-translationally, 4'-phosphopantetheine is transferred from CoA to a specific serine of apo-ACP by AcpS. This modification is essential for activity because fatty acids are bound in thioester linkage to the sulfhydryl of the prosthetic group.

The protein resides in the cytoplasm. The protein operates within lipid metabolism; fatty acid biosynthesis. In terms of biological role, carrier of the growing fatty acid chain in fatty acid biosynthesis. This is Acyl carrier protein from Desulforudis audaxviator (strain MP104C).